Reading from the N-terminus, the 328-residue chain is Malate dehydrogenase (328 aa).

G12–G18 contacts NAD(+). Positions 95 and 101 each coordinate substrate. Residues N108, Q115, and V132–N134 contribute to the NAD(+) site. 2 residues coordinate substrate: N134 and R165. The active-site Proton acceptor is H190.

This sequence belongs to the LDH/MDH superfamily. MDH type 2 family.

The enzyme catalyses (S)-malate + NAD(+) = oxaloacetate + NADH + H(+). Its function is as follows. Catalyzes the reversible oxidation of malate to oxaloacetate. The sequence is that of Malate dehydrogenase from Methylibium petroleiphilum (strain ATCC BAA-1232 / LMG 22953 / PM1).